Consider the following 414-residue polypeptide: Apolipoprotein N-acyltransferase (414 aa).

6 helical membrane-spanning segments follow: residues 19-39 (GIAL…HFGI), 40-60 (TSPL…LKLP), 63-83 (SGFA…ALSF), 91-111 (LIPF…SMAL), 121-141 (LLLW…VPEV), and 153-173 (LSFG…QRWL). The CN hydrolase domain occupies 202–414 (IETHIPQEIR…NRSPSGIIAP (213 aa)). The active-site Proton acceptor is the Glu243. Lys298 is an active-site residue. Catalysis depends on Cys351, which acts as the Nucleophile.

This sequence belongs to the CN hydrolase family. Apolipoprotein N-acyltransferase subfamily.

The protein localises to the cell inner membrane. It carries out the reaction N-terminal S-1,2-diacyl-sn-glyceryl-L-cysteinyl-[lipoprotein] + a glycerophospholipid = N-acyl-S-1,2-diacyl-sn-glyceryl-L-cysteinyl-[lipoprotein] + a 2-acyl-sn-glycero-3-phospholipid + H(+). It functions in the pathway protein modification; lipoprotein biosynthesis (N-acyl transfer). Catalyzes the phospholipid dependent N-acylation of the N-terminal cysteine of apolipoprotein, the last step in lipoprotein maturation. This chain is Apolipoprotein N-acyltransferase, found in Wolinella succinogenes (strain ATCC 29543 / DSM 1740 / CCUG 13145 / JCM 31913 / LMG 7466 / NCTC 11488 / FDC 602W) (Vibrio succinogenes).